A 4235-amino-acid polypeptide reads, in one-letter code: Tenellin synthetase (4235 aa).

The Ketosynthase family 3 (KS3) domain occupies 15–455 (SEPIAIVGSA…GTNAHAIIER (441 aa)). Catalysis depends on for beta-ketoacyl synthase activity residues cysteine 189, histidine 326, and histidine 375. A malonyl-CoA:ACP transacylase (MAT) domain region spans residues 590 to 924 (IFTGQGAQWP…ANDAVAFSTA (335 aa)). The N-terminal hotdog fold stretch occupies residues 993–1135 (HELLGRRMPD…GRIAVHLGAK (143 aa)). Positions 993–1310 (HELLGRRMPD…GFEVRAVGEP (318 aa)) are dehydratase (DH) domain. Residues 993-1313 (HELLGRRMPD…VRAVGEPDAS (321 aa)) enclose the PKS/mFAS DH domain. Histidine 1025 (proton acceptor; for dehydratase activity) is an active-site residue. The segment at 1158–1313 (LQQLDCEKLY…VRAVGEPDAS (156 aa)) is C-terminal hotdog fold. The active-site Proton donor; for dehydratase activity is aspartate 1217. Residues 1459–1652 (RLYTEDKGMH…FSGVDHIVHD (194 aa)) are methyltransferase (MT) domain. The tract at residues 2208-2381 (TYLMVGAAGG…AASIIHVGHV (174 aa)) is ketoreductase (KR) domain. The 81-residue stretch at 2500 to 2580 (EAAAAALKGF…QLSALAAKLA (81 aa)) folds into the Carrier 1 domain. Serine 2540 bears the O-(pantetheine 4'-phosphoryl)serine mark. The tract at residues 2587–2709 (RAQLEEASGN…EISSNGFFTQ (123 aa)) is disordered. Positions 2605 to 2619 (NDKETGPSKKGKAQE) are enriched in basic and acidic residues. 2 stretches are compositionally biased toward polar residues: residues 2645 to 2659 (GGSS…SSVS) and 2666 to 2678 (QEST…NNGE). Residues 2679–2695 (STPSKSSNCNSDSGSDN) show a composition bias toward low complexity. A condensation (C) domain region spans residues 2720–3163 (REAPMSPAQS…TAQSVGDCVV (444 aa)). The tract at residues 3197 to 3609 (CQQHSTKSAI…DGTLLCFGRI (413 aa)) is adenylation (A) (KR) domain. Residues 3724–3750 (DEAAAATSPSNDNNNNNTPSGGGGEKM) form a disordered region. Low complexity predominate over residues 3726–3742 (AAAATSPSNDNNNNNTP). The 86-residue stretch at 3748–3833 (EKMTVRQGEL…GMARCVAEQR (86 aa)) folds into the Carrier 2 domain. Serine 3793 carries the O-(pantetheine 4'-phosphoryl)serine modification. Positions 3860-3889 (EKLQHSSASSSSSSSSSSAGSSSTQRPRKT) are disordered. A compositionally biased stretch (low complexity) spans 3865–3882 (SSASSSSSSSSSSAGSSS). The segment at 3896 to 4141 (LTGATGFLGG…LDFGQVDKVV (246 aa)) is reductase (RED) domain.

This sequence in the C-terminal section; belongs to the NRP synthetase family.

Its pathway is secondary metabolite biosynthesis. In terms of biological role, hybrid PKS-NRPS synthetase; part of the gene cluster that mediates the biosynthesis of tenellin-type 2-pyridones, iron-chelating compounds involved in iron stress tolerance, competition with the natural competitor fungus Metarhizium robertsii and insect hosts infection. TenS catalyzes the assembly of the polyketide-amino acid backbone. Because tenS lacks a designated enoylreductase (ER) domain, the required activity is provided the enoyl reductase tenC. Upon formation of the polyketide backbone on the thiotemplate, the triketide is transferred to the NRPS module and linked to tyrosine to produce the pyrrolidine-2-dione intermediates, including pretellinin A, 11-hydropretellenin A, 12-hydropretellenin A, 13-hydropretellenin A, 14-hydropretellenin A, 12-oxopretellenin A and prototellinin D. The pathway begins with the assembly of the polyketide-amino acid backbone by the hybrid PKS-NRPS tenS with the help of the enoyl reductase tenC. These enzymes catalyze the synthesis of the pyrrolidine-2-dione intermediates pretellinin A, 11-hydropretellenin A, 12-hydropretellenin A, 13-hydropretellenin A, 14-hydropretellenin A, 12-oxopretellenin A and prototellinin D. The cytochrome P450 monooxygenase tenA then catalyzes an oxidative ring expansion of pretenellin A and 14-hydropretellenin A to form the 2-pyridone core, leading to pretenellin B and pyridovericin, respectively. The cytochrome P450 monooxygenase tenB is then required for the selective N-hydroxylation of the 2-pyridone nitrogen of yield tellinin and 15-hydroxytellenin (15-HT), respectively. The UDP-glucosyltransferase GT1 and the methyltransferase MT1, located outside the tenS gene cluster, contribute to the stepwise glycosylation and methylation of 15-HT to obtain the glycoside pyridovericin-N-O-(4-O-methyl-beta-D-glucopyranoside) (PMGP). Additional related compounds such as 1-O-methyl-15-HT, (8Z)-1-O-methyl-15-HT, and O-methyltenellin A are also produced but the enzymes involved in their biosynthesis have still to be determined. The chain is Tenellin synthetase from Beauveria bassiana (strain ARSEF 2860) (White muscardine disease fungus).